A 574-amino-acid chain; its full sequence is Glycine--tRNA ligase (574 aa).

Substrate-binding residues include Arg96 and Glu162. ATP contacts are provided by residues 194–196 (RNE), 204–209 (IRLREF), 327–328 (EC), and 450–453 (GIDR). Substrate is bound at residue 209–213 (FTQAE). 446-450 (EPSYG) serves as a coordination point for substrate.

It belongs to the class-II aminoacyl-tRNA synthetase family.

Its subcellular location is the cytoplasm. The catalysed reaction is tRNA(Gly) + glycine + ATP = glycyl-tRNA(Gly) + AMP + diphosphate. Catalyzes the attachment of glycine to tRNA(Gly). The sequence is that of Glycine--tRNA ligase from Methanococcus maripaludis (strain DSM 14266 / JCM 13030 / NBRC 101832 / S2 / LL).